A 367-amino-acid polypeptide reads, in one-letter code: Uroporphyrinogen decarboxylase (367 aa).

The residue at position 1 (methionine 1) is an N-acetylmethionine. The coproporphyrinogen I site is built by arginine 37, alanine 39, arginine 41, arginine 50, aspartate 86, tyrosine 164, serine 219, and histidine 339. The coproporphyrinogen III site is built by arginine 37, alanine 39, and arginine 41. Positions 86, 164, 219, and 339 each coordinate coproporphyrinogen III.

Belongs to the uroporphyrinogen decarboxylase family. As to quaternary structure, homodimer.

The protein resides in the cytoplasm. The protein localises to the cytosol. It catalyses the reaction uroporphyrinogen III + 4 H(+) = coproporphyrinogen III + 4 CO2. The catalysed reaction is uroporphyrinogen I + 4 H(+) = coproporphyrinogen I + 4 CO2. It participates in porphyrin-containing compound metabolism; protoporphyrin-IX biosynthesis; coproporphyrinogen-III from 5-aminolevulinate: step 4/4. Catalyzes the sequential decarboxylation of the four acetate side chains of uroporphyrinogen to form coproporphyrinogen and participates in the fifth step in the heme biosynthetic pathway. Isomer I or isomer III of uroporphyrinogen may serve as substrate, but only coproporphyrinogen III can ultimately be converted to heme. In vitro also decarboxylates pentacarboxylate porphyrinogen I. The chain is Uroporphyrinogen decarboxylase from Homo sapiens (Human).